We begin with the raw amino-acid sequence, 95 residues long: Enhancer of yellow 2 transcription factor (95 aa).

The protein belongs to the ENY2 family. In terms of assembly, component of the nuclear pore complex (NPC)-associated AMEX complex (anchoring and mRNA export complex), composed of at least e(y)2 and xmas-2. Component of the SAGA transcription coactivator-HAT complexes, at least composed of Ada2b, e(y)2, Pcaf/Gcn5, Taf10 and Nipped-A/Trrap. Within the SAGA complex, e(y)2, Sgf11, and not/nonstop form an additional subcomplex of SAGA called the DUB module (deubiquitination module). Component of the THO complex, composed of at least e(y)2, HPR1, THO2, THOC5, THOC6 and THOC7. Interacts with e(y)1. Interacts with su(Hw) (via zinc fingers). Interacts with xmas-2; required for localization to the nuclear periphery. Interacts with the nuclear pore complex (NPC).

The protein resides in the nucleus. It localises to the nucleoplasm. The protein localises to the cytoplasm. Functionally, involved in mRNA export coupled transcription activation by association with both the AMEX and the SAGA complexes. The SAGA complex is a multiprotein complex that activates transcription by remodeling chromatin and mediating histone acetylation and deubiquitination. Within the SAGA complex, participates in a subcomplex that specifically deubiquitinates histone H2B. The SAGA complex is recruited to specific gene promoters by activators, where it is required for transcription. Required for nuclear receptor-mediated transactivation. Involved in transcription elongation by recruiting the THO complex onto nascent mRNA. The AMEX complex functions in docking export-competent ribonucleoprotein particles (mRNPs) to the nuclear entrance of the nuclear pore complex (nuclear basket). AMEX participates in mRNA export and accurate chromatin positioning in the nucleus by tethering genes to the nuclear periphery. This chain is Enhancer of yellow 2 transcription factor, found in Drosophila virilis (Fruit fly).